A 375-amino-acid chain; its full sequence is Putative serine protease 47 (375 aa).

A signal peptide spans 1-23 (MGYCQGVSQVAVVLLMFPKEKEA). The disordered stretch occupies residues 41–60 (DGQLPMGPHSRASQVAPETT). Over residues 51 to 60 (RASQVAPETT) the composition is skewed to polar residues. A Peptidase S1 domain is found at 81–323 (IYGGRDAAAG…FINWIDEIMR (243 aa)). An intrachain disulfide couples C106 to C122. Residues H121 and D172 each act as charge relay system in the active site. N-linked (GlcNAc...) asparagine glycans are attached at residues N183 and N203. C206 and C281 are joined by a disulfide. The active-site Charge relay system is S275.

It belongs to the peptidase S1 family.

Its subcellular location is the secreted. This is Putative serine protease 47 (PRSS47P) from Homo sapiens (Human).